The primary structure comprises 74 residues: ATP synthase F(1) complex subunit epsilon, mitochondrial (74 aa).

This sequence belongs to the eukaryotic ATPase epsilon family. Component of the ATP synthase complex composed at least of ATP5F1A/subunit alpha, ATP5F1B/subunit beta, ATP5MC1/subunit c (homooctomer), MT-ATP6/subunit a, MT-ATP8/subunit 8, ATP5ME/subunit e, ATP5MF/subunit f, ATP5MG/subunit g, ATP5MK/subunit k, ATP5MJ/subunit j, ATP5F1C/subunit gamma, ATP5F1D/subunit delta, ATP5F1E/subunit epsilon, ATP5PF/subunit F6, ATP5PB/subunit b, ATP5PD/subunit d, ATP5PO/subunit OSCP. ATP synthase complex consists of a soluble F(1) head domain (subunits alpha(3) and beta(3)) - the catalytic core - and a membrane F(0) domain - the membrane proton channel (subunits c, a, 8, e, f, g, k and j). These two domains are linked by a central stalk (subunits gamma, delta, and epsilon) rotating inside the F1 region and a stationary peripheral stalk (subunits F6, b, d, and OSCP).

The protein localises to the mitochondrion. It is found in the mitochondrion inner membrane. In terms of biological role, subunit epsilon, of the mitochondrial membrane ATP synthase complex (F(1)F(0) ATP synthase or Complex V) that produces ATP from ADP in the presence of a proton gradient across the membrane which is generated by electron transport complexes of the respiratory chain. ATP synthase complex consist of a soluble F(1) head domain - the catalytic core - and a membrane F(1) domain - the membrane proton channel. These two domains are linked by a central stalk rotating inside the F(1) region and a stationary peripheral stalk. During catalysis, ATP synthesis in the catalytic domain of F(1) is coupled via a rotary mechanism of the central stalk subunits to proton translocation. In vivo, can only synthesize ATP although its ATP hydrolase activity can be activated artificially in vitro. May be essential for the assembly of F(1) and may play an important role in the incorporation of the hydrophobic subunit c into the F(1)-c oligomer rotor of the mitochondrial ATP synthase complex. In Dictyostelium discoideum (Social amoeba), this protein is ATP synthase F(1) complex subunit epsilon, mitochondrial.